A 672-amino-acid polypeptide reads, in one-letter code: MKAIVFAYHDIGCVGLEALKLAGYEIQAVFTHSDAPGENHFYASVAKAAAEMDVPVFAPEDVNHPLWVNRIRELAPDVIFSFYYRTLLSDDILQLPSFGAFNLHGSLLPRYRGRAPVNWVLVNGETQTGVTLHKMVSRADAGDIVAQSVVEIDDEDTALTLHGKCRTTAAALLAQQLPLIRSREIMLTPQDESQASYFGRRTAADGLIDWQKSAREINNLIRAVTEPYPGAFTFLGERKVVIWRARVLKNDSVKANGVKQEPGSIISTSPLVVSCGEDALEIVSGQSESGLYMSGSRLAAEMGMVPQAKLGNLASRVQRRRTRVLILGVNGFIGNHLTERLLRDDRYEIYGLDISSDAIARFLGDPRFHFVEGDISIHNEWIEYHIKKCDVILPLVAIATPIEYTRNPLRVFELDFEENLKIVRDCVRYNKRIVFPSTSEVYGMCDDKEFDEDTSRLIVGPINKQRWIYSVSKQLLDRVIWAYGAKNGLRFTLFRPFNWMGPRLDTLDAARIGSSRAITQLILNLVEGSPIKLVDGGAQKRCFTDIHDGIEALFRIIENRNGQCDGQIINIGNPHNEASIRELGDMLLTSFNAHPLRDRFPPFAGFIEVESSSYYGKGYQDVAHRTPSIRNAKRLLEWEPTVKMEQTVAETLDYFLRTVDPQHADNVTDTQG.

Positions 1–310 (MKAIVFAYHD…EMGMVPQAKL (310 aa)) are formyltransferase ArnAFT. Catalysis depends on His104, which acts as the Proton donor; for formyltransferase activity. (6R)-10-formyltetrahydrofolate-binding positions include Arg114 and 136–140 (VSRAD). Residues 320–672 (RRTRVLILGV…HADNVTDTQG (353 aa)) form a dehydrogenase ArnADH region. NAD(+)-binding positions include Asp353 and 374-375 (DI). UDP-alpha-D-glucuronate-binding positions include Ala399, Tyr404, and 438–439 (TS). Residue Glu440 is the Proton acceptor; for decarboxylase activity of the active site. UDP-alpha-D-glucuronate is bound by residues Arg466, Asn498, 532–541 (KLVDGGAQKR), and Tyr619. The active-site Proton donor; for decarboxylase activity is the Arg625.

It in the N-terminal section; belongs to the Fmt family. UDP-L-Ara4N formyltransferase subfamily. This sequence in the C-terminal section; belongs to the NAD(P)-dependent epimerase/dehydratase family. UDP-glucuronic acid decarboxylase subfamily. Homohexamer, formed by a dimer of trimers.

It catalyses the reaction UDP-alpha-D-glucuronate + NAD(+) = UDP-beta-L-threo-pentopyranos-4-ulose + CO2 + NADH. It carries out the reaction UDP-4-amino-4-deoxy-beta-L-arabinose + (6R)-10-formyltetrahydrofolate = UDP-4-deoxy-4-formamido-beta-L-arabinose + (6S)-5,6,7,8-tetrahydrofolate + H(+). It functions in the pathway nucleotide-sugar biosynthesis; UDP-4-deoxy-4-formamido-beta-L-arabinose biosynthesis; UDP-4-deoxy-4-formamido-beta-L-arabinose from UDP-alpha-D-glucuronate: step 1/3. Its pathway is nucleotide-sugar biosynthesis; UDP-4-deoxy-4-formamido-beta-L-arabinose biosynthesis; UDP-4-deoxy-4-formamido-beta-L-arabinose from UDP-alpha-D-glucuronate: step 3/3. It participates in bacterial outer membrane biogenesis; lipopolysaccharide biosynthesis. In terms of biological role, bifunctional enzyme that catalyzes the oxidative decarboxylation of UDP-glucuronic acid (UDP-GlcUA) to UDP-4-keto-arabinose (UDP-Ara4O) and the addition of a formyl group to UDP-4-amino-4-deoxy-L-arabinose (UDP-L-Ara4N) to form UDP-L-4-formamido-arabinose (UDP-L-Ara4FN). The modified arabinose is attached to lipid A and is required for resistance to polymyxin and cationic antimicrobial peptides. This Pectobacterium carotovorum subsp. carotovorum (strain PC1) protein is Bifunctional polymyxin resistance protein ArnA.